A 71-amino-acid chain; its full sequence is UPF0346 protein SPT_1257 (71 aa).

Belongs to the UPF0346 family.

In Streptococcus pneumoniae (strain Taiwan19F-14), this protein is UPF0346 protein SPT_1257.